The sequence spans 574 residues: MAAASSVLRCCLLVAALMTLSAMGAEAITRQYLFDVQTTSVTRLCSTKSIVTVNGQYPGPTLFAREGDHVEVTVVNHSPYNMSIHWHGIRQLLSGWADGPSYITQCPIQPGGSYVYRFTITGQRGTLWWHAHISWLRATVHGPMVILPPAGVGYPFPAPHEEVPIMFGEWWNNDTEAVISQALQTGGGPNISDAYTLNGLPGPLYNCSAQDTFKLKVKPGKTYMLRLINAALNDELFFSIANHTLTVVDVDALYVKPFTVDTLIIAPGQTSNVLLTAKPTYPGASYYMLARPYTTTQGTFDNTTVAGVLEYDDPCPTTAAGKIVPIFSPTLPQINDTNAVSNFTAKLRSLASAGYPAAVPQQVDHRFFFTVGLGTHPCAVNGTCQGPNGSRFAASINNVSFVLPATALLQSHFAGKSKGVYASNFPYYPLNPFNYTGTPPNNTNVMNGTKVLVLPYGANVELVMQDTSILGAESHPLHLHGFNFFVVGQGFGNFDPINDPAKFNLYDPVERNTVGVPAGGWVAIRFHADNPGVWFMHCHLEVHMSWGLKMAWLVLDGSRPDQKLPPPPLDLPKC.

The first 27 residues, 1–27 (MAAASSVLRCCLLVAALMTLSAMGAEA), serve as a signal peptide directing secretion. 2 consecutive Plastocyanin-like domains span residues 35–151 (DVQT…PPAG) and 161–314 (EEVP…YDDP). N81 is a glycosylation site (N-linked (GlcNAc...) asparagine). Residues H85, H87, H130, and H132 each contribute to the Cu cation site. N173, N190, N206, N242, N302, N335, N342, N381, N388, N398, N434, N441, and N447 each carry an N-linked (GlcNAc...) asparagine glycan. The 135-residue stretch at 424 to 558 (NFPYYPLNPF…KMAWLVLDGS (135 aa)) folds into the Plastocyanin-like 3 domain. 7 residues coordinate Cu cation: H475, H478, H480, H537, C538, H539, and H543.

It belongs to the multicopper oxidase family. Cu cation is required as a cofactor.

The protein localises to the secreted. It localises to the extracellular space. It is found in the apoplast. The catalysed reaction is 4 hydroquinone + O2 = 4 benzosemiquinone + 2 H2O. Functionally, lignin degradation and detoxification of lignin-derived products. In Oryza sativa subsp. japonica (Rice), this protein is Laccase-12 (LAC12).